The chain runs to 292 residues: Phosphoenolpyruvate guanylyltransferase (292 aa).

Positions 168, 184, and 187 each coordinate phosphoenolpyruvate. Residues 243-292 form a disordered region; it reads PLVAEDSGGSGGESGTSAESGLSVPPGIVGGTQRRIVSDASGPGRAKKYP.

The protein belongs to the CofC family.

It catalyses the reaction phosphoenolpyruvate + GTP + H(+) = enolpyruvoyl-2-diphospho-5'-guanosine + diphosphate. The protein operates within cofactor biosynthesis; coenzyme F420 biosynthesis. Functionally, guanylyltransferase that catalyzes the activation of phosphoenolpyruvate (PEP) as enolpyruvoyl-2-diphospho-5'-guanosine, via the condensation of PEP with GTP. It is involved in the biosynthesis of coenzyme F420, a hydride carrier cofactor. In Frankia casuarinae (strain DSM 45818 / CECT 9043 / HFP020203 / CcI3), this protein is Phosphoenolpyruvate guanylyltransferase.